Here is a 212-residue protein sequence, read N- to C-terminus: Pyrrolidone-carboxylate peptidase (212 aa).

Residues glutamate 80, cysteine 143, and histidine 165 contribute to the active site.

The protein belongs to the peptidase C15 family. In terms of assembly, homotetramer.

The protein resides in the cytoplasm. It catalyses the reaction Release of an N-terminal pyroglutamyl group from a polypeptide, the second amino acid generally not being Pro.. Its function is as follows. Removes 5-oxoproline from various penultimate amino acid residues except L-proline. In Vibrio vulnificus (strain YJ016), this protein is Pyrrolidone-carboxylate peptidase.